Reading from the N-terminus, the 461-residue chain is Argininosuccinate lyase (461 aa).

This sequence belongs to the lyase 1 family. Argininosuccinate lyase subfamily.

The protein localises to the cytoplasm. It catalyses the reaction 2-(N(omega)-L-arginino)succinate = fumarate + L-arginine. Its pathway is amino-acid biosynthesis; L-arginine biosynthesis; L-arginine from L-ornithine and carbamoyl phosphate: step 3/3. The protein is Argininosuccinate lyase of Limosilactobacillus reuteri subsp. reuteri (strain JCM 1112) (Lactobacillus reuteri).